The sequence spans 140 residues: ATP synthase epsilon chain (140 aa).

It belongs to the ATPase epsilon chain family. In terms of assembly, F-type ATPases have 2 components, CF(1) - the catalytic core - and CF(0) - the membrane proton channel. CF(1) has five subunits: alpha(3), beta(3), gamma(1), delta(1), epsilon(1). CF(0) has three main subunits: a, b and c.

It is found in the cell inner membrane. Its function is as follows. Produces ATP from ADP in the presence of a proton gradient across the membrane. The polypeptide is ATP synthase epsilon chain (Laribacter hongkongensis (strain HLHK9)).